Consider the following 537-residue polypeptide: Lysine--tRNA ligase (537 aa).

A 'HIGH' region motif is present at residues 30 to 38 (PSGNIHIGN). A 'KMSKS' region motif is present at residues 276–280 (AMSSS).

It belongs to the class-I aminoacyl-tRNA synthetase family.

It is found in the cytoplasm. It carries out the reaction tRNA(Lys) + L-lysine + ATP = L-lysyl-tRNA(Lys) + AMP + diphosphate. In Methanosarcina barkeri, this protein is Lysine--tRNA ligase.